We begin with the raw amino-acid sequence, 290 residues long: Coiled-coil domain-containing protein 137 (290 aa).

Disordered regions lie at residues 1–92 (MARP…EAQV), 98–117 (LEKE…FKQR), 139–181 (LSKN…EARA), and 269–290 (RQEM…HACL). Residues 20–39 (SGQPQGRRQQQAQGQQRSAS) are compositionally biased toward low complexity. Positions 56–79 (KNQDEQEIPFRLREIMRSRQEMKK) are enriched in basic and acidic residues. Residues 66-89 (RLREIMRSRQEMKKTLSNKKRKKE) are a coiled coil. The segment covering 154-163 (PKKEKSERKK) has biased composition (basic and acidic residues). The stretch at 155–192 (KKEKSERKKAFQKRRLEKAQRKREARAVDRLEQELLKD) forms a coiled coil. Positions 164–178 (AFQKRRLEKAQRKRE) are enriched in basic residues.

The protein resides in the chromosome. This is Coiled-coil domain-containing protein 137 (Ccdc137) from Mus musculus (Mouse).